A 1035-amino-acid polypeptide reads, in one-letter code: Potassium-transporting ATPase alpha chain 1 (1035 aa).

The tract at residues Met-1 to Glu-41 is disordered. Residues Met-1 to Pro-98 are Cytoplasmic-facing. Phosphotyrosine occurs at positions 7 and 10. Over residues Met-26–Lys-40 the composition is skewed to basic residues. The residue at position 27 (Ser-27) is a Phosphoserine. The chain crosses the membrane as a helical span at residues Glu-99–Ala-119. At Ala-120–Tyr-142 the chain is on the lumenal side. A helical transmembrane segment spans residues Leu-143–Phe-163. Topologically, residues Lys-164 to Ile-299 are cytoplasmic. The chain crosses the membrane as a helical span at residues Glu-300–Val-319. Over Val-320 to Ala-331 the chain is Lumenal. A helical transmembrane segment spans residues Met-332–Ala-349. K(+) contacts are provided by Val-340, Ala-341, Val-343, and Glu-345. The Cytoplasmic portion of the chain corresponds to Thr-350–Leu-783. The active-site 4-aspartylphosphate intermediate is Asp-387. Mg(2+)-binding residues include Asp-387 and Thr-389. Phosphoserine is present on residues Ser-463 and Ser-601. 2 residues coordinate Mg(2+): Asp-728 and Asp-732. The chain crosses the membrane as a helical span at residues Lys-784 to Ile-803. Glu-797 lines the K(+) pocket. Residues Tyr-804–Leu-813 lie on the Lumenal side of the membrane. Residues Gly-814–Ala-834 form a helical membrane-spanning segment. A K(+)-binding site is contributed by Glu-822. The Cytoplasmic segment spans residues Tyr-835–Arg-854. Ser-840 is subject to Phosphoserine. A helical transmembrane segment spans residues Leu-855–Phe-877. Residues Thr-878–Cys-929 are Lumenal-facing. A helical transmembrane segment spans residues Tyr-930–Lys-949. The Cytoplasmic portion of the chain corresponds to Thr-950–Asn-963. The residue at position 954 (Ser-954) is a Phosphoserine; by PKA. A helical transmembrane segment spans residues Arg-964 to Tyr-982. Residues Cys-983–Phe-997 lie on the Lumenal side of the membrane. The helical transmembrane segment at Gln-998–Lys-1018 threads the bilayer. The Cytoplasmic segment spans residues Leu-1019–Tyr-1035.

This sequence belongs to the cation transport ATPase (P-type) (TC 3.A.3) family. Type IIC subfamily. As to quaternary structure, the gastric H(+)/K(+) ATPase pump is composed of the catalytic alpha subunit ATP4A and the regulatory beta subunit ATP4B. Interacts (via the P-domain) with ATP4B (via N-terminus); this interaction stabilizes the lumenal-open E2 conformation state and prevents the reverse reaction of the transport cycle.

The protein localises to the apical cell membrane. Its subcellular location is the cell membrane. The catalysed reaction is K(+)(out) + ATP + H2O + H(+)(in) = K(+)(in) + ADP + phosphate + 2 H(+)(out). Its function is as follows. The catalytic subunit of the gastric H(+)/K(+) ATPase pump which transports H(+) ions in exchange for K(+) ions across the apical membrane of parietal cells. Uses ATP as an energy source to pump H(+) ions to the gastric lumen while transporting K(+) ion from the lumen into the cell. Remarkably generates a million-fold proton gradient across the gastric parietal cell membrane, acidifying the gastric juice down to pH 1. Within a transport cycle, the transfer of a H(+) ion across the membrane is coupled to ATP hydrolysis and is associated with a transient phosphorylation that shifts the pump conformation from inward-facing (E1) to outward-facing state (E2). The release of the H(+) ion in the stomach lumen is followed by binding of K(+) ion converting the pump conformation back to the E1 state. This Oryctolagus cuniculus (Rabbit) protein is Potassium-transporting ATPase alpha chain 1 (ATP4A).